The sequence spans 289 residues: Protease HtpX (289 aa).

2 helical membrane passes run 5–25 (IVLF…VMSL) and 33–53 (MSGL…ISLL). H140 is a binding site for Zn(2+). Residue E141 is part of the active site. A Zn(2+)-binding site is contributed by H144. Helical transmembrane passes span 155 to 175 (LLQG…GGFI) and 193 to 213 (GIVL…TMWF). E218 provides a ligand contact to Zn(2+).

Belongs to the peptidase M48B family. Requires Zn(2+) as cofactor.

It localises to the cell inner membrane. This chain is Protease HtpX, found in Xylella fastidiosa (strain M23).